A 161-amino-acid chain; its full sequence is Nucleotide-binding protein BamMC406_2474 (161 aa).

It belongs to the YajQ family.

In terms of biological role, nucleotide-binding protein. The polypeptide is Nucleotide-binding protein BamMC406_2474 (Burkholderia ambifaria (strain MC40-6)).